Reading from the N-terminus, the 231-residue chain is MQLIKNNEYEYADIILSSFVNLGDSELKKIKNVQKLLTQVDIGHYYLNKLPAFDAYLQYNELYENKRITSGVYMCAVATVMGYKDLYLTGIDFYQEKGNPYAFHHQKENIIKLLPSFSQNKSQSDIHSMEYDLNALYFLQKHYGVNIYCISPESPLCNYFPLSPLNNPITFILEEKKNYTQDILIPPKFVYKKIGIYSKPRIYQNLIFRLIWDILRLPNDIKHALKSRKWD.

This is an uncharacterized protein from Haemophilus influenzae (strain ATCC 51907 / DSM 11121 / KW20 / Rd).